Consider the following 230-residue polypeptide: MHRLAKIISNAGVCSRRDAEKLIVAGQVKVDGITILSPTTNVDISNQIEVSGTLINNIHKPRLWIYYKPVGLITTHKDPLSRKTVFEQLTGLPRVISIGRLDLNSEGLLLLTNSGDLARQFELPSSRLKRVYHVRAYGKSDILLKSNYKNLEIDGIFYNPHSIKLLKQNKTNCWFEVVLFEGKNREIRRIFEYCGLKVNKLIRIQYGSFTIDNLKPGDYKEINNKILENN.

The region spanning 2-69 is the S4 RNA-binding domain; the sequence is HRLAKIISNA…KPRLWIYYKP (68 aa). D102 functions as the Nucleophile in the catalytic mechanism.

It belongs to the pseudouridine synthase RsuA family.

It carries out the reaction a uridine in RNA = a pseudouridine in RNA. This is an uncharacterized protein from Rickettsia conorii (strain ATCC VR-613 / Malish 7).